Reading from the N-terminus, the 147-residue chain is Hemoglobin subunit epsilon (147 aa).

A Globin domain is found at 3–147 (HFTAEEKAAI…VAIALGHKYH (145 aa)). Phosphoserine is present on residues Ser-14 and Ser-51. 2 residues coordinate heme b: His-64 and His-93.

The protein belongs to the globin family. In terms of assembly, heterotetramer of two alpha chains and two epsilon chains in early embryonic hemoglobin Gower-2; two zeta chains and two epsilon chains in early embryonic hemoglobin Gower-1. In terms of tissue distribution, red blood cells.

In terms of biological role, the epsilon chain is a beta-type chain of early mammalian embryonic hemoglobin. This Alouatta belzebul (Red-handed howler monkey) protein is Hemoglobin subunit epsilon (HBE1).